A 199-amino-acid polypeptide reads, in one-letter code: Nicotinamide riboside kinase 1 (199 aa).

10 to 18 (GVTNSGKTT) contributes to the ATP binding site. Residues threonine 17 and aspartate 36 each coordinate Mg(2+). The active-site Proton acceptor is aspartate 36. Substrate contacts are provided by residues 36-39 (DDFF) and 55-56 (YD). Arginine 128 provides a ligand contact to ATP. Residues arginine 129 and 134–135 (YQ) each bind substrate. Residues 132-134 (RVY) and 172-174 (KSE) contribute to the ATP site.

Belongs to the uridine kinase family. NRK subfamily. In terms of assembly, monomer.

The enzyme catalyses beta-nicotinamide D-riboside + ATP = beta-nicotinamide D-ribonucleotide + ADP + H(+). The catalysed reaction is beta-D-ribosylnicotinate + ATP = nicotinate beta-D-ribonucleotide + ADP + H(+). The protein operates within cofactor biosynthesis; NAD(+) biosynthesis. Its function is as follows. Catalyzes the phosphorylation of nicotinamide riboside (NR) and nicotinic acid riboside (NaR) to form nicotinamide mononucleotide (NMN) and nicotinic acid mononucleotide (NaMN). The enzyme also phosphorylates the antitumor drugs tiazofurin and 3-deazaguanosine. In Homo sapiens (Human), this protein is Nicotinamide riboside kinase 1 (NMRK1).